The sequence spans 156 residues: Small ribosomal subunit protein uS7 (156 aa).

It belongs to the universal ribosomal protein uS7 family. As to quaternary structure, part of the 30S ribosomal subunit. Contacts proteins S9 and S11.

One of the primary rRNA binding proteins, it binds directly to 16S rRNA where it nucleates assembly of the head domain of the 30S subunit. Is located at the subunit interface close to the decoding center, probably blocks exit of the E-site tRNA. This chain is Small ribosomal subunit protein uS7, found in Edwardsiella ictaluri (strain 93-146).